Here is a 314-residue protein sequence, read N- to C-terminus: Replication initiation protein (314 aa).

Over residues Met-1–Asn-18 the composition is skewed to basic and acidic residues. The segment at Met-1–Gly-25 is disordered.

It belongs to the plasmid replication initiation factor family.

Its function is as follows. This protein is probably a specific topoisomerase involved in initiating replication. This protein is specifically required and may be rate-limiting for replication of the plasmid in vivo. The chain is Replication initiation protein (repE) from Staphylococcus aureus.